A 637-amino-acid polypeptide reads, in one-letter code: Acyl-CoA ligase cm3C (637 aa).

ATP-binding positions include 282–290 (TSGTSGRQK), 423–428 (HAWGLT), aspartate 507, arginine 526, and lysine 624. Residues 353 to 423 (DMQRMLGSVA…SLQPSWEFLH (71 aa)) are SBD1. Positions 424–486 (AWGLTETCIV…YKAPNMFVGY (63 aa)) are SBD2.

The protein belongs to the ATP-dependent AMP-binding enzyme family.

It functions in the pathway secondary metabolite biosynthesis. Its function is as follows. Acyl-CoA ligase; part of the gene cluster that mediates the biosynthesis of beauveriolides I and III, cyclodepsipeptides acting as inhibitors of the acyl-CoA:cholesterol acyltransferase. The HR-PKS cm3B initiates the biosynthesis of beauveriolides by iteratively catalyzing the formation of the linear polyketide chain. The ATP-dependent acetyl-CoA ligase cm3D converts the polyketide carboxylic acid to a CoA thioester which id shuttled to the first T domain in the NRPS cm3A by the acetyltransferase cm3C. Cm3A contains 13 domains and assembles the polyketide chain, L-phenylalanine, L-alanine, and D-leucine (or D-allo-isoleucine) to form beauveriolide I (or beauveriolide III). The production of both beauveriolides I and III suggests the substrate adaptability of cm3B, using different amino acids as substrates. This Cordyceps militaris (strain CM01) (Caterpillar fungus) protein is Acyl-CoA ligase cm3C.